The following is a 1370-amino-acid chain: DNA polymerase II large subunit (1370 aa).

Disordered stretches follow at residues 279–317 (IGADDADEDTPDAGSDSDATDEGDAPSASTDAEEPPRAA) and 1041–1081 (AGDA…DGGS).

This sequence belongs to the archaeal DNA polymerase II family. In terms of assembly, heterodimer of a large subunit and a small subunit. Post-translationally, this protein undergoes a protein self splicing that involves a post-translational excision of the intervening region (intein) followed by peptide ligation.

It carries out the reaction DNA(n) + a 2'-deoxyribonucleoside 5'-triphosphate = DNA(n+1) + diphosphate. The catalysed reaction is Exonucleolytic cleavage in the 3'- to 5'-direction to yield nucleoside 5'-phosphates.. Possesses two activities: a DNA synthesis (polymerase) and an exonucleolytic activity that degrades single-stranded DNA in the 3'- to 5'-direction. Has a template-primer preference which is characteristic of a replicative DNA polymerase. The polypeptide is DNA polymerase II large subunit (polC) (Halobacterium salinarum (strain ATCC 700922 / JCM 11081 / NRC-1) (Halobacterium halobium)).